A 265-amino-acid chain; its full sequence is 3'(2'),5'-bisphosphate nucleotidase CysQ (265 aa).

Positions 80, 99, 101, 102, and 222 each coordinate Mg(2+). Residue Glu-80 participates in substrate binding. Substrate contacts are provided by residues 101–104 (LDGT) and Asp-222.

This sequence belongs to the inositol monophosphatase superfamily. CysQ family. The cofactor is Mg(2+).

It is found in the cell inner membrane. It carries out the reaction adenosine 3',5'-bisphosphate + H2O = AMP + phosphate. Functionally, converts adenosine-3',5'-bisphosphate (PAP) to AMP. The sequence is that of 3'(2'),5'-bisphosphate nucleotidase CysQ from Buchnera aphidicola subsp. Acyrthosiphon pisum (strain APS) (Acyrthosiphon pisum symbiotic bacterium).